Consider the following 193-residue polypeptide: Holliday junction branch migration complex subunit RuvA (193 aa).

Positions 1-64 (MITSLTGTIL…EDAHLLYGFM (64 aa)) are domain I. The segment at 65-139 (TVAERDMFRL…DKMGGIAPGP (75 aa)) is domain II. Residues 139–143 (PMGRG) are flexible linker. A domain III region spans residues 144-193 (GAGDPRQEAIAALLTLGYKPAQASQAIAGLADGLGLEDLIRQSLQNLSRH).

Belongs to the RuvA family. As to quaternary structure, homotetramer. Forms an RuvA(8)-RuvB(12)-Holliday junction (HJ) complex. HJ DNA is sandwiched between 2 RuvA tetramers; dsDNA enters through RuvA and exits via RuvB. An RuvB hexamer assembles on each DNA strand where it exits the tetramer. Each RuvB hexamer is contacted by two RuvA subunits (via domain III) on 2 adjacent RuvB subunits; this complex drives branch migration. In the full resolvosome a probable DNA-RuvA(4)-RuvB(12)-RuvC(2) complex forms which resolves the HJ.

The protein resides in the cytoplasm. In terms of biological role, the RuvA-RuvB-RuvC complex processes Holliday junction (HJ) DNA during genetic recombination and DNA repair, while the RuvA-RuvB complex plays an important role in the rescue of blocked DNA replication forks via replication fork reversal (RFR). RuvA specifically binds to HJ cruciform DNA, conferring on it an open structure. The RuvB hexamer acts as an ATP-dependent pump, pulling dsDNA into and through the RuvAB complex. HJ branch migration allows RuvC to scan DNA until it finds its consensus sequence, where it cleaves and resolves the cruciform DNA. This Acidithiobacillus ferrooxidans (strain ATCC 53993 / BNL-5-31) (Leptospirillum ferrooxidans (ATCC 53993)) protein is Holliday junction branch migration complex subunit RuvA.